A 657-amino-acid chain; its full sequence is MTRLAIGKPAPLGAHYDGQGVNFTLFSAHAERVELCVFDANGQEHRYDLPGHSGDIWHGYLPDARPGLRYGYRVHGPWQPAEGHRFNPAKLLIDPCARQIDGEFKDNPLLHAGHNEPDYRDNAAIAPKCVVVVDHYDWEDDAPPRTPWGSTIIYEAHVKGLTYLHPEIPVEIRGTYKALGHPVMINYLKQLGITALELLPVAQFASEPRLQRMGLSNYWGYNPVAMFALHPAYACSPETALDEFRDAIKALHKAGIEVILDIVLNHSAELDLDGPLFSLRGIDNRSYYWIREDGDYHNWTGCGNTLNLSHPAVVDYASACLRYWVETCHVDGFRFDLAAVMGRTPEFRQDAPLFTAIQNCPVLSQVKLIAEPWDIAPGGYQVGNFPPLFAEWNDHFRDAARRFWLHYDLPLGAFAGRFAASSDVFKRNGRLPSAAINLVTAHDGFTLRDCVCFNHKHNEANGEENRDGTNNNYSNNHGKEGLGGSLDLVERRRDSIHALLTTLLLSQGTPMLLAGDEHGHSQHGNNNAYCQDNQLTWLDWSQASSGLTAFTAALIHLRKRIPALVENRWWEEGDGNVRWLNRYAQPLSTDEWQNGPKQLQILLSDRFLIAINATLEVTEIVLPAGEWHAIPPFAGEDNPVITAVWQGPAHGLCVFQR.

The Nucleophile role is filled by Asp336. Glu371 functions as the Proton donor in the catalytic mechanism. Basic and acidic residues predominate over residues Asn458 to Asp467. The interval Asn458 to Lys479 is disordered.

Belongs to the glycosyl hydrolase 13 family.

The catalysed reaction is Hydrolysis of (1-&gt;6)-alpha-D-glucosidic linkages to branches with degrees of polymerization of three or four glucose residues in limit dextrin.. It functions in the pathway glycan degradation; glycogen degradation. Removes maltotriose and maltotetraose chains that are attached by 1,6-alpha-linkage to the limit dextrin main chain, generating a debranched limit dextrin. The polypeptide is Glycogen debranching enzyme (Escherichia coli (strain SE11)).